The following is a 195-amino-acid chain: Putative NADH dehydrogenase/NAD(P)H nitroreductase RSc1004 (195 aa).

This sequence belongs to the nitroreductase family. HadB/RutE subfamily. Requires FMN as cofactor.

This is Putative NADH dehydrogenase/NAD(P)H nitroreductase RSc1004 from Ralstonia nicotianae (strain ATCC BAA-1114 / GMI1000) (Ralstonia solanacearum).